The chain runs to 232 residues: uncharacterized protein (232 aa).

5 helical membrane passes run 69–91, 104–126, 139–161, 166–188, and 200–219; these read LISA…YILF, FLEP…FFAL, FSRF…FFFL, ICFT…AMLS, and FIYS…QLII.

Its subcellular location is the cell membrane. This is an uncharacterized protein from Bacillus subtilis (strain 168).